Here is a 628-residue protein sequence, read N- to C-terminus: tRNA uridine 5-carboxymethylaminomethyl modification enzyme MnmG 1 (628 aa).

Position 11–16 (11–16 (GAGHAG)) interacts with FAD. 280–294 (GPRHCPSIDRKVLNF) lines the NAD(+) pocket.

Belongs to the MnmG family. Homodimer. Heterotetramer of two MnmE and two MnmG subunits. It depends on FAD as a cofactor.

It is found in the cytoplasm. NAD-binding protein involved in the addition of a carboxymethylaminomethyl (cmnm) group at the wobble position (U34) of certain tRNAs, forming tRNA-cmnm(5)s(2)U34. The chain is tRNA uridine 5-carboxymethylaminomethyl modification enzyme MnmG 1 from Fusobacterium nucleatum subsp. nucleatum (strain ATCC 25586 / DSM 15643 / BCRC 10681 / CIP 101130 / JCM 8532 / KCTC 2640 / LMG 13131 / VPI 4355).